A 296-amino-acid chain; its full sequence is Putative mannose 6-phosphate receptor-like protein C530.09c (296 aa).

The N-terminal stretch at 1–25 (MRLLTCLINVLAGLTLFSQFQRAFG) is a signal peptide. The Lumenal segment spans residues 26–206 (LTITRRGFKV…TVKKDSTLNP (181 aa)). An MRH domain is found at 42–197 (PFCALHHPNT…EWKTIHACPT (156 aa)). Cysteines 44 and 87 form a disulfide. N-linked (GlcNAc...) asparagine glycosylation is found at Asn-64, Asn-81, Asn-93, Asn-96, and Asn-143. Cystine bridges form between Cys-147-Cys-183 and Cys-163-Cys-195. A helical transmembrane segment spans residues 207–227 (VSVFLLFCAIAFLAYFVGGFV). Residues 228–249 (YQRVVLNARGLRQIPNYEMWRS) lie on the Cytoplasmic side of the membrane. A helical transmembrane segment spans residues 250–270 (LFGFISDIVIILYSSILSILP). Residues 271-296 (SSITRMRGNRRNIDYVEDALIDDIDT) are Lumenal-facing.

The protein belongs to the MRL1/IGF2R family.

The protein resides in the golgi apparatus. It localises to the trans-Golgi network membrane. Its subcellular location is the endosome membrane. The chain is Putative mannose 6-phosphate receptor-like protein C530.09c from Schizosaccharomyces pombe (strain 972 / ATCC 24843) (Fission yeast).